The chain runs to 192 residues: Ras-like GTP-binding protein Rho1 (192 aa).

Position 12 to 19 (12 to 19 (GDGACGKT)) interacts with GTP. Positions 34–42 (YVPTVFENY) match the Effector region motif. GTP is bound by residues 59–63 (DTAGQ) and 117–120 (NKKD). Cys-189 is modified (cysteine methyl ester). The S-geranylgeranyl cysteine moiety is linked to residue Cys-189. The propeptide at 190 to 192 (LLL) is removed in mature form.

The protein belongs to the small GTPase superfamily. Rho family. As to quaternary structure, interacts with capu. Interacts (via REM repeats) with Pkn (via N-terminus). Interacts (via N-terminus) with wash (via N-terminus). May interact with dia/diaphanous (via CBD/FH3 domain). In terms of tissue distribution, expressed in hemocytes (at protein level).

It is found in the cell membrane. Its subcellular location is the cytoplasm. It localises to the cytoskeleton. The protein resides in the apical cell membrane. The protein localises to the lateral cell membrane. In terms of biological role, has a role in regulating actin cytoskeletal organization: required during early development for proper execution of morphogenetic movements of individual cells and groups of cells important for the formation of the embryonic body plan. Plays a role in regulating dorsal closure during embryogenesis. During axis elongation, required for Rho-kinase Rok planar polarity and adherens junction localization as well as for generating a planar polarized distribution of the actin-binding protein Shrm. During embryogenesis, acts upstream of wash to regulate the developmental migration of tail hemocytes anteriorly along the ventral midline. May have a role in eye development. Involved in targeted recruitment of dia/diaphanous to apical membranes of polarized epithelial cells. This Drosophila melanogaster (Fruit fly) protein is Ras-like GTP-binding protein Rho1.